A 426-amino-acid chain; its full sequence is Elongation factor Tu, mitochondrial (426 aa).

The transit peptide at 1 to 27 (MFKNLAGSFRAVSRVAFKTRPSLVRSY) directs the protein to the mitochondrion. The tr-type G domain occupies 34-230 (KPHVNIGTIG…AVDEHIPTPT (197 aa)). Positions 43-50 (GHVDHGKT) are G1. 43–50 (GHVDHGKT) provides a ligand contact to GTP. The interval 84–88 (GITIS) is G2. A G3 region spans residues 105 to 108 (DCPG). Residues 105-109 (DCPGH) and 160-163 (NKVD) each bind GTP. Positions 160-163 (NKVD) are G4. A G5 region spans residues 198 to 200 (SAL).

It belongs to the TRAFAC class translation factor GTPase superfamily. Classic translation factor GTPase family. EF-Tu/EF-1A subfamily.

The protein localises to the mitochondrion. It participates in protein biosynthesis; polypeptide chain elongation. In terms of biological role, G-protein that, in its active GTP-bound form, binds to and delivers aminoacyl-tRNA to the A-site of ribosomes during protein biosynthesis. In the presence of a correct codon-anticodon match between the aminoacyl-tRNA and the A-site codon of the ribosome-bound mRNA, the ribosome acts as a GTPase activator and the GTP is hydrolyzed. The inactive GDP-bound form leaves the ribosome and must be recycled before binding another molecule of aminoacyl-tRNA. Required for mitochondrial protein biosynthesis and maintenance of mitochondrial DNA. The protein is Elongation factor Tu, mitochondrial (TUF1) of Meyerozyma guilliermondii (strain ATCC 6260 / CBS 566 / DSM 6381 / JCM 1539 / NBRC 10279 / NRRL Y-324) (Yeast).